A 257-amino-acid chain; its full sequence is tRNA (guanine-N(1)-)-methyltransferase (257 aa).

S-adenosyl-L-methionine is bound by residues glycine 117 and 137 to 142 (LGDFVL).

This sequence belongs to the RNA methyltransferase TrmD family. In terms of assembly, homodimer.

Its subcellular location is the cytoplasm. It catalyses the reaction guanosine(37) in tRNA + S-adenosyl-L-methionine = N(1)-methylguanosine(37) in tRNA + S-adenosyl-L-homocysteine + H(+). Its function is as follows. Specifically methylates guanosine-37 in various tRNAs. The protein is tRNA (guanine-N(1)-)-methyltransferase of Bordetella parapertussis (strain 12822 / ATCC BAA-587 / NCTC 13253).